Reading from the N-terminus, the 205-residue chain is Probable GTP-binding protein EngB (205 aa).

Positions 21–196 (QVPEVAFAGR…VHEVSKCVKE (176 aa)) constitute an EngB-type G domain. GTP is bound by residues 29 to 36 (GRSNVGKS), 56 to 60 (GSTRQ), 74 to 77 (DLPG), 141 to 144 (TKID), and 172 to 177 (IIGTSS). Mg(2+)-binding residues include Ser-36 and Thr-58.

Belongs to the TRAFAC class TrmE-Era-EngA-EngB-Septin-like GTPase superfamily. EngB GTPase family. Requires Mg(2+) as cofactor.

Its function is as follows. Necessary for normal cell division and for the maintenance of normal septation. The protein is Probable GTP-binding protein EngB of Anaplasma marginale (strain Florida).